A 133-amino-acid chain; its full sequence is Small ribosomal subunit protein uS8 (133 aa).

This sequence belongs to the universal ribosomal protein uS8 family. As to quaternary structure, part of the 30S ribosomal subunit. Contacts proteins S5 and S12.

Its function is as follows. One of the primary rRNA binding proteins, it binds directly to 16S rRNA central domain where it helps coordinate assembly of the platform of the 30S subunit. In Synechococcus sp. (strain WH7803), this protein is Small ribosomal subunit protein uS8.